Here is a 23-residue protein sequence, read N- to C-terminus: Basic phospholipase A2 mangshantoxin (23 aa).

It belongs to the phospholipase A2 family. Group II subfamily. Ca(2+) is required as a cofactor. In terms of processing, contains 7 disulfide bonds. In terms of tissue distribution, expressed by the venom gland.

The protein localises to the secreted. It carries out the reaction a 1,2-diacyl-sn-glycero-3-phosphocholine + H2O = a 1-acyl-sn-glycero-3-phosphocholine + a fatty acid + H(+). In terms of biological role, snake venom phospholipase A2 (PLA2) that displays presynaptic neurotoxicity. PLA2 catalyzes the calcium-dependent hydrolysis of the 2-acyl groups in 3-sn-phosphoglycerides. The sequence is that of Basic phospholipase A2 mangshantoxin from Protobothrops mangshanensis (Mangshan pitviper).